The sequence spans 368 residues: Hydrophobic dipeptide epimerase (368 aa).

Substrate contacts are provided by residues T143 and 168–170 (KIK). Mg(2+) is bound by residues D197, E225, and D253. Residues K277 and 329–331 (DMD) contribute to the substrate site.

The protein belongs to the mandelate racemase/muconate lactonizing enzyme family. Requires Mg(2+) as cofactor.

Its function is as follows. Catalyzes the epimerization of various hydrophobic dipeptides, such as L-Ala-L-Phe. Has epimerase activity with L-Ala-L-Thr, L-Ala-L-Met, L-Ala-L-Tyr, as well as L-Phe-L-Met, L-Phe-L-Ser and L-Phe-L-Thr (in vitro). This is Hydrophobic dipeptide epimerase from Citrifermentans bemidjiense (strain ATCC BAA-1014 / DSM 16622 / JCM 12645 / Bem) (Geobacter bemidjiensis).